The primary structure comprises 203 residues: Holliday junction branch migration complex subunit RuvA (203 aa).

The tract at residues 1-63 (MIFSVRGEVL…EDSMTLYGFS (63 aa)) is domain I. The tract at residues 64–141 (DAENRDLFLA…GPVGASGLTV (78 aa)) is domain II. Residues 141–145 (VGTAA) are flexible linker. The segment at 146 to 203 (DGNAVRGSVVEALVGLGFAAKQAEEATDQVLDGELGKDGAVATSSALRAALSLLGKTR) is domain III.

The protein belongs to the RuvA family. Homotetramer. Forms an RuvA(8)-RuvB(12)-Holliday junction (HJ) complex. HJ DNA is sandwiched between 2 RuvA tetramers; dsDNA enters through RuvA and exits via RuvB. An RuvB hexamer assembles on each DNA strand where it exits the tetramer. Each RuvB hexamer is contacted by two RuvA subunits (via domain III) on 2 adjacent RuvB subunits; this complex drives branch migration. In the full resolvosome a probable DNA-RuvA(4)-RuvB(12)-RuvC(2) complex forms which resolves the HJ.

It is found in the cytoplasm. The RuvA-RuvB-RuvC complex processes Holliday junction (HJ) DNA during genetic recombination and DNA repair, while the RuvA-RuvB complex plays an important role in the rescue of blocked DNA replication forks via replication fork reversal (RFR). RuvA specifically binds to HJ cruciform DNA, conferring on it an open structure. The RuvB hexamer acts as an ATP-dependent pump, pulling dsDNA into and through the RuvAB complex. HJ branch migration allows RuvC to scan DNA until it finds its consensus sequence, where it cleaves and resolves the cruciform DNA. The sequence is that of Holliday junction branch migration complex subunit RuvA from Mycobacterium leprae (strain Br4923).